Reading from the N-terminus, the 343-residue chain is N-acetyl-gamma-glutamyl-phosphate reductase (343 aa).

The active site involves C149.

Belongs to the NAGSA dehydrogenase family. Type 1 subfamily.

It localises to the cytoplasm. It carries out the reaction N-acetyl-L-glutamate 5-semialdehyde + phosphate + NADP(+) = N-acetyl-L-glutamyl 5-phosphate + NADPH + H(+). It participates in amino-acid biosynthesis; L-arginine biosynthesis; N(2)-acetyl-L-ornithine from L-glutamate: step 3/4. In terms of biological role, catalyzes the NADPH-dependent reduction of N-acetyl-5-glutamyl phosphate to yield N-acetyl-L-glutamate 5-semialdehyde. This Exiguobacterium sibiricum (strain DSM 17290 / CCUG 55495 / CIP 109462 / JCM 13490 / 255-15) protein is N-acetyl-gamma-glutamyl-phosphate reductase.